Here is a 460-residue protein sequence, read N- to C-terminus: Argininosuccinate lyase (460 aa).

It belongs to the lyase 1 family. Argininosuccinate lyase subfamily.

The protein localises to the cytoplasm. The enzyme catalyses 2-(N(omega)-L-arginino)succinate = fumarate + L-arginine. It participates in amino-acid biosynthesis; L-arginine biosynthesis; L-arginine from L-ornithine and carbamoyl phosphate: step 3/3. The sequence is that of Argininosuccinate lyase from Limosilactobacillus fermentum (strain NBRC 3956 / LMG 18251) (Lactobacillus fermentum).